We begin with the raw amino-acid sequence, 160 residues long: H/ACA ribonucleoprotein complex subunit 2 (160 aa).

The residue at position 15 (Ser-15) is a Phosphoserine. Thr-23 carries the phosphothreonine modification.

Belongs to the eukaryotic ribosomal protein eL8 family. As to quaternary structure, component of the box H/ACA small nucleolar ribonucleoprotein (H/ACA snoRNP) complex consisting of Nop60B, Gar1, NPH2 and Nop10, and associated with H/ACA-type snoRNAs.

The protein resides in the nucleus. It is found in the nucleolus. Functionally, component of the box H/ACA small nucleolar ribonucleoprotein (H/ACA snoRNP) complex, which catalyzes pseudouridylation of rRNA. This involves the isomerization of uridine such that the ribose is subsequently attached to C5, instead of the normal N1. Pseudouridine ('psi') residues may serve to stabilize the conformation of rRNAs. Required for ribosome biogenesis. H/ACA snoRNP complex-dependent ribosome biogenesis is important in female germline cell differentiation during oogenesis. The protein is H/ACA ribonucleoprotein complex subunit 2 of Drosophila melanogaster (Fruit fly).